Consider the following 81-residue polypeptide: Cysteine-rich and transmembrane domain-containing protein PCC1 (81 aa).

Positions 1–22 (MNQSAQNYFSVQKPSETSSGPY) are enriched in polar residues. The disordered stretch occupies residues 1–34 (MNQSAQNYFSVQKPSETSSGPYTSPPPIGYPTRD). Residues 56–74 (AIMSCFSTCMECIFCCGVC) traverse the membrane as a helical segment.

This sequence belongs to the CYSTM1 family. As to expression, expressed at very low levels in seedlings and petioles, and at higher levels in leaves. Also present in phloem sap.

The protein resides in the cell membrane. Functionally, modulates resistance against pathogens including oomycetes (e.g. Hyaloperonospora parasitica and Phytophthora brassicae) and fungi (e.g. Phytophthora brassicae). Controls the abscisic acid-mediated (ABA) signaling pathways. Regulator of the flowering time in response to stress (e.g. UV-C). Regulates polar lipid content; promotes phosphatidylinositol (PI) and 18:0 but prevents 18:2 and 18:3 polar lipids accumulation. The protein is Cysteine-rich and transmembrane domain-containing protein PCC1 (PCC1) of Arabidopsis thaliana (Mouse-ear cress).